Consider the following 115-residue polypeptide: Probable 4-amino-4-deoxy-L-arabinose-phosphoundecaprenol flippase subunit ArnE (115 aa).

The next 3 membrane-spanning stretches (helical) occupy residues 42 to 62, 65 to 85, and 93 to 112; these read PWPW…LLLL, VEVG…TLVA, and VDRR…ALLG. One can recognise an EamA domain in the interval 46–113; that stretch reads LALLALGLGL…IVAGVALLGR (68 aa).

This sequence belongs to the ArnE family. Heterodimer of ArnE and ArnF.

The protein localises to the cell inner membrane. Its pathway is bacterial outer membrane biogenesis; lipopolysaccharide biosynthesis. Its function is as follows. Translocates 4-amino-4-deoxy-L-arabinose-phosphoundecaprenol (alpha-L-Ara4N-phosphoundecaprenol) from the cytoplasmic to the periplasmic side of the inner membrane. This is Probable 4-amino-4-deoxy-L-arabinose-phosphoundecaprenol flippase subunit ArnE from Pseudomonas paraeruginosa (strain DSM 24068 / PA7) (Pseudomonas aeruginosa (strain PA7)).